A 128-amino-acid polypeptide reads, in one-letter code: MKVAIIACQKMVEMGCPGKEACVSCFKAINEKSGAFERYKDVELVAFTTCGGCPGRRFPMRVKLLKTAAGAEAIHIANCTFLQPECPYINFDEICKKLMEELEIPIVFGTHTLVKKGEVVCTCGDNKE.

To M.jannaschii MJ0766.

This is an uncharacterized protein from Methanocaldococcus jannaschii (strain ATCC 43067 / DSM 2661 / JAL-1 / JCM 10045 / NBRC 100440) (Methanococcus jannaschii).